Here is a 385-residue protein sequence, read N- to C-terminus: Phospho-N-acetylmuramoyl-pentapeptide-transferase (385 aa).

10 helical membrane-spanning segments follow: residues 23–43 (FITV…LGAG), 79–99 (MGGI…GAVA), 103–123 (VWLS…DDYV), 135–155 (AWYK…VLYF), 186–206 (LGVD…VTAV), 218–238 (GLTT…VYVS), 258–278 (LTVF…YNGY), 282–302 (VFMG…TILM), 307–327 (LLLP…IVQT), and 362–382 (KIVT…LLIL).

It belongs to the glycosyltransferase 4 family. MraY subfamily. It depends on Mg(2+) as a cofactor.

It is found in the cell inner membrane. It carries out the reaction UDP-N-acetyl-alpha-D-muramoyl-L-alanyl-gamma-D-glutamyl-meso-2,6-diaminopimeloyl-D-alanyl-D-alanine + di-trans,octa-cis-undecaprenyl phosphate = di-trans,octa-cis-undecaprenyl diphospho-N-acetyl-alpha-D-muramoyl-L-alanyl-D-glutamyl-meso-2,6-diaminopimeloyl-D-alanyl-D-alanine + UMP. Its pathway is cell wall biogenesis; peptidoglycan biosynthesis. Its function is as follows. Catalyzes the initial step of the lipid cycle reactions in the biosynthesis of the cell wall peptidoglycan: transfers peptidoglycan precursor phospho-MurNAc-pentapeptide from UDP-MurNAc-pentapeptide onto the lipid carrier undecaprenyl phosphate, yielding undecaprenyl-pyrophosphoryl-MurNAc-pentapeptide, known as lipid I. This Salinibacter ruber (strain DSM 13855 / M31) protein is Phospho-N-acetylmuramoyl-pentapeptide-transferase.